We begin with the raw amino-acid sequence, 336 residues long: Phosphoribosylformylglycinamidine cyclo-ligase (336 aa).

This sequence belongs to the AIR synthase family.

It is found in the cytoplasm. The enzyme catalyses 2-formamido-N(1)-(5-O-phospho-beta-D-ribosyl)acetamidine + ATP = 5-amino-1-(5-phospho-beta-D-ribosyl)imidazole + ADP + phosphate + H(+). It functions in the pathway purine metabolism; IMP biosynthesis via de novo pathway; 5-amino-1-(5-phospho-D-ribosyl)imidazole from N(2)-formyl-N(1)-(5-phospho-D-ribosyl)glycinamide: step 2/2. This Caldanaerobacter subterraneus subsp. tengcongensis (strain DSM 15242 / JCM 11007 / NBRC 100824 / MB4) (Thermoanaerobacter tengcongensis) protein is Phosphoribosylformylglycinamidine cyclo-ligase.